The sequence spans 214 residues: Soluble inorganic pyrophosphatase (214 aa).

Residues K64, R78, and Y90 each coordinate substrate. Residues D100, D105, and D137 each contribute to the Mg(2+) site. Y174 is a binding site for substrate.

Belongs to the PPase family. It depends on Mg(2+) as a cofactor.

It localises to the cytoplasm. The enzyme catalyses diphosphate + H2O = 2 phosphate + H(+). This is Soluble inorganic pyrophosphatase (IPP) from Oryza sativa subsp. indica (Rice).